Reading from the N-terminus, the 137-residue chain is Structural protein A137R (137 aa).

The protein belongs to the asfivirus A137R family. As to quaternary structure, interacts with host TBK1.

It localises to the virion. The protein localises to the host cytoplasm. In terms of biological role, plays a role in the inhibition of the host innate immune response. Mechanistically, promotes the autophagy-mediated lysosomal degradation of host TBK1 and affects IRF3 nuclear translocation to block type I IFN production. The protein is Structural protein A137R of Ornithodoros (relapsing fever ticks).